We begin with the raw amino-acid sequence, 276 residues long: Glutamate 5-kinase (276 aa).

Lysine 14 is a binding site for ATP. Substrate-binding residues include serine 54, aspartate 141, and asparagine 157. Residues serine 177 to aspartate 178 and threonine 219 to lysine 225 each bind ATP.

The protein belongs to the glutamate 5-kinase family.

The protein resides in the cytoplasm. The enzyme catalyses L-glutamate + ATP = L-glutamyl 5-phosphate + ADP. It participates in amino-acid biosynthesis; L-proline biosynthesis; L-glutamate 5-semialdehyde from L-glutamate: step 1/2. Its function is as follows. Catalyzes the transfer of a phosphate group to glutamate to form L-glutamate 5-phosphate. The chain is Glutamate 5-kinase from Listeria innocua serovar 6a (strain ATCC BAA-680 / CLIP 11262).